We begin with the raw amino-acid sequence, 650 residues long: Flap endonuclease 1 (650 aa).

The tract at residues 1-106 (MGIKGLTKFI…SELEKRGEKR (106 aa)) is N-domain. Asp34 contacts Mg(2+). DNA is bound by residues Arg47 and Arg72. Positions 88, 160, 162, 181, and 183 each coordinate Mg(2+). Residues 124–266 (EIKKQSGRTV…KTAYNLIKEY (143 aa)) are I-domain. Glu160 is a binding site for DNA. Positions 244 and 246 each coordinate DNA. Asp246 is a binding site for Mg(2+). The interval 349-357 (TQRRLDNFF) is interaction with PCNA. Positions 371–592 (ETKKEQTLPA…NSYNNIKNNN (222 aa)) are disordered. 3 stretches are compositionally biased toward basic and acidic residues: residues 413 to 469 (MKEE…KKSL), 478 to 502 (DSDK…EKIN), and 511 to 524 (DHSR…KDNI). Low complexity predominate over residues 525 to 562 (SDINNNNNNNNNNSSSNNNNISNNHFNSVSSNSTFNSS). Basic and acidic residues predominate over residues 565–581 (LKSEDTLKSNSPLKEDS). The segment covering 582-592 (PNSYNNIKNNN) has biased composition (low complexity).

It belongs to the XPG/RAD2 endonuclease family. FEN1 subfamily. As to quaternary structure, interacts with PCNA1 and PCNA2. Three molecules of FEN1 bind to one PCNA trimer with each molecule binding to one PCNA monomer. PCNA stimulates the nuclease activity without altering cleavage specificity. Mg(2+) is required as a cofactor. Post-translationally, phosphorylated. Phosphorylation upon DNA damage induces relocalization to the nuclear plasma.

The protein resides in the nucleus. Its subcellular location is the nucleolus. It localises to the nucleoplasm. It is found in the mitochondrion. Inhibited by monovalent metal ions. In terms of biological role, structure-specific nuclease with 5'-flap endonuclease and 5'-3' exonuclease activities involved in DNA replication and repair. During DNA replication, cleaves the 5'-overhanging flap structure that is generated by displacement synthesis when DNA polymerase encounters the 5'-end of a downstream Okazaki fragment. It enters the flap from the 5'-end and then tracks to cleave the flap base, leaving a nick for ligation. Also involved in the long patch base excision repair (LP-BER) pathway, by cleaving within the apurinic/apyrimidinic (AP) site-terminated flap. Acts as a genome stabilization factor that prevents flaps from equilibrating into structures that lead to duplications and deletions. Also possesses 5'-3' exonuclease activity on nicked or gapped double-stranded DNA, and exhibits RNase H activity. Also involved in replication and repair of rDNA and in repairing mitochondrial DNA. The sequence is that of Flap endonuclease 1 from Plasmodium falciparum.